Here is an 82-residue protein sequence, read N- to C-terminus: Small ribosomal subunit protein uS17c (82 aa).

It belongs to the universal ribosomal protein uS17 family. As to quaternary structure, part of the 30S ribosomal subunit.

The protein localises to the plastid. Its subcellular location is the chloroplast. One of the primary rRNA binding proteins, it binds specifically to the 5'-end of 16S ribosomal RNA. The sequence is that of Small ribosomal subunit protein uS17c (rps17) from Cyanidioschyzon merolae (strain NIES-3377 / 10D) (Unicellular red alga).